The sequence spans 415 residues: ATP-dependent RNA helicase RhlB (415 aa).

Positions 9–37 match the Q motif motif; it reads QRFSALPLHPIVRGALAKKGFDFCTPIQA. The Helicase ATP-binding domain occupies 40–218; the sequence is LPISLNGRDV…FEDMNEPEYI (179 aa). 53–60 contacts ATP; that stretch reads AQTGTGKT. Positions 164 to 167 match the DEAD box motif; it reads DEAD. In terms of domain architecture, Helicase C-terminal spans 241 to 389; sequence DKMALLLTLM…VSQYETEALL (149 aa).

Belongs to the DEAD box helicase family. RhlB subfamily. As to quaternary structure, component of the RNA degradosome, which is a multiprotein complex involved in RNA processing and mRNA degradation.

The protein localises to the cytoplasm. The enzyme catalyses ATP + H2O = ADP + phosphate + H(+). DEAD-box RNA helicase involved in RNA degradation. Has RNA-dependent ATPase activity and unwinds double-stranded RNA. This is ATP-dependent RNA helicase RhlB from Haemophilus influenzae (strain ATCC 51907 / DSM 11121 / KW20 / Rd).